The primary structure comprises 477 residues: 23S rRNA (uracil(1939)-C(5))-methyltransferase RlmD (477 aa).

The region spanning 7-66 (KTENFPPDWLLVESLDLEAQGVAHRADGKVVFIKGALPFELVSANVHRKKNNWEQGVVTA) is the TRAM domain. Residues cysteine 79, cysteine 89, cysteine 92, and cysteine 171 each coordinate [4Fe-4S] cluster. The S-adenosyl-L-methionine site is built by glutamine 280, phenylalanine 309, asparagine 314, glutamate 330, asparagine 365, and aspartate 386. Residue cysteine 432 is the Nucleophile of the active site.

It belongs to the class I-like SAM-binding methyltransferase superfamily. RNA M5U methyltransferase family. RlmD subfamily.

It carries out the reaction uridine(1939) in 23S rRNA + S-adenosyl-L-methionine = 5-methyluridine(1939) in 23S rRNA + S-adenosyl-L-homocysteine + H(+). Functionally, catalyzes the formation of 5-methyl-uridine at position 1939 (m5U1939) in 23S rRNA. In Albidiferax ferrireducens (strain ATCC BAA-621 / DSM 15236 / T118) (Rhodoferax ferrireducens), this protein is 23S rRNA (uracil(1939)-C(5))-methyltransferase RlmD.